The sequence spans 718 residues: Pullulanase (718 aa).

Residue D406 is the Nucleophile of the active site. The active-site Proton donor is E435.

This sequence belongs to the glycosyl hydrolase 13 family.

The enzyme catalyses Hydrolysis of (1-&gt;6)-alpha-D-glucosidic linkages in pullulan, amylopectin and glycogen, and in the alpha- and beta-limit dextrins of amylopectin and glycogen.. This chain is Pullulanase (amyX), found in Bacillus subtilis (strain 168).